The following is a 157-amino-acid chain: N-acetylgalactosamine-specific phosphotransferase enzyme IIB component 2 (157 aa).

The PTS EIIB type-4 domain occupies 1 to 157; the sequence is MPNIVLSRID…EPAVDLFKLL (157 aa). Residue His15 is the Pros-phosphohistidine intermediate of the active site.

It localises to the cytoplasm. In terms of biological role, the phosphoenolpyruvate-dependent sugar phosphotransferase system (sugar PTS), a major carbohydrate active -transport system, catalyzes the phosphorylation of incoming sugar substrates concomitantly with their translocation across the cell membrane. This system is involved in N-acetylgalactosamine transport. The chain is N-acetylgalactosamine-specific phosphotransferase enzyme IIB component 2 (agaV) from Escherichia coli (strain K12).